The primary structure comprises 282 residues: MNMAESHLDPSKLATGPAGFGAAAGQRPLAPLNAKIEVKNLNFFYNQFHALKNINLSIPEGKVTAFIGPSGCGKSTLLRTFNKMYALYPEQRAEGEIVMDGENLLQSKLDISLLRARIGMVFQKPTPFPMSIYDNIAFGVKMFERLTRSEMDDRVEWALTKAALWNEVKDKLSQSGYGLSGGQQQRLCIARGIAIRPEVLLLDEPCSALDPISTGRIEELIAELKSDYTVVIVTHNMQQAARCSDYTAYMYLGELIEFGETEKIFIKPARKETEDYITGRFG.

Positions 36 to 277 (IEVKNLNFFY…PARKETEDYI (242 aa)) constitute an ABC transporter domain. 68–75 (GPSGCGKS) serves as a coordination point for ATP.

Belongs to the ABC transporter superfamily. Phosphate importer (TC 3.A.1.7) family. As to quaternary structure, the complex is composed of two ATP-binding proteins (PstB), two transmembrane proteins (PstC and PstA) and a solute-binding protein (PstS).

The protein resides in the cell inner membrane. It catalyses the reaction phosphate(out) + ATP + H2O = ADP + 2 phosphate(in) + H(+). Functionally, part of the ABC transporter complex PstSACB involved in phosphate import. Responsible for energy coupling to the transport system. This chain is Phosphate import ATP-binding protein PstB, found in Burkholderia pseudomallei (strain 1710b).